The chain runs to 84 residues: Small ribosomal subunit protein bS16 (84 aa).

Belongs to the bacterial ribosomal protein bS16 family.

The protein is Small ribosomal subunit protein bS16 of Dichelobacter nodosus (strain VCS1703A).